Reading from the N-terminus, the 276-residue chain is Large ribosomal subunit protein uL2 (276 aa).

Disordered regions lie at residues 1 to 60 (MSIK…RHKR) and 226 to 276 (NAVD…KRNQ). The segment covering 20 to 31 (SKEEITREEPEK) has biased composition (basic and acidic residues). Composition is skewed to basic residues over residues 50–60 (STRRQGGRHKR) and 258–276 (KTRR…KRNQ).

It belongs to the universal ribosomal protein uL2 family. As to quaternary structure, part of the 50S ribosomal subunit. Forms a bridge to the 30S subunit in the 70S ribosome.

Its function is as follows. One of the primary rRNA binding proteins. Required for association of the 30S and 50S subunits to form the 70S ribosome, for tRNA binding and peptide bond formation. It has been suggested to have peptidyltransferase activity; this is somewhat controversial. Makes several contacts with the 16S rRNA in the 70S ribosome. In Natranaerobius thermophilus (strain ATCC BAA-1301 / DSM 18059 / JW/NM-WN-LF), this protein is Large ribosomal subunit protein uL2.